We begin with the raw amino-acid sequence, 510 residues long: Chromosomal replication initiator protein DnaA (510 aa).

Residues methionine 1 to arginine 87 are domain I, interacts with DnaA modulators. The interval arginine 87–serine 173 is domain II. Residues aspartate 140–glutamine 160 form a disordered region. Residues alanine 144–arginine 157 show a composition bias toward low complexity. The tract at residues tyrosine 174 to serine 390 is domain III, AAA+ region. Glycine 218, glycine 220, lysine 221, and threonine 222 together coordinate ATP. Residues histidine 391–threonine 510 form a domain IV, binds dsDNA region.

It belongs to the DnaA family. Oligomerizes as a right-handed, spiral filament on DNA at oriC.

It is found in the cytoplasm. In terms of biological role, plays an essential role in the initiation and regulation of chromosomal replication. ATP-DnaA binds to the origin of replication (oriC) to initiate formation of the DNA replication initiation complex once per cell cycle. Binds the DnaA box (a 9 base pair repeat at the origin) and separates the double-stranded (ds)DNA. Forms a right-handed helical filament on oriC DNA; dsDNA binds to the exterior of the filament while single-stranded (ss)DNA is stabiized in the filament's interior. The ATP-DnaA-oriC complex binds and stabilizes one strand of the AT-rich DNA unwinding element (DUE), permitting loading of DNA polymerase. After initiation quickly degrades to an ADP-DnaA complex that is not apt for DNA replication. Binds acidic phospholipids. This Pseudomonas putida (strain GB-1) protein is Chromosomal replication initiator protein DnaA.